The chain runs to 288 residues: 4-hydroxybenzoate octaprenyltransferase (288 aa).

6 helical membrane-spanning segments follow: residues 20-40 (IGTL…AGGL), 43-63 (LKVF…GCII), 96-116 (LFVV…PLVV), 210-230 (QIIG…GMVA), 234-254 (AIYA…QKLI), and 262-282 (CFTA…ALML).

This sequence belongs to the UbiA prenyltransferase family. The cofactor is Mg(2+).

It is found in the cell inner membrane. It catalyses the reaction all-trans-octaprenyl diphosphate + 4-hydroxybenzoate = 4-hydroxy-3-(all-trans-octaprenyl)benzoate + diphosphate. It functions in the pathway cofactor biosynthesis; ubiquinone biosynthesis. Functionally, catalyzes the prenylation of para-hydroxybenzoate (PHB) with an all-trans polyprenyl group. Mediates the second step in the final reaction sequence of ubiquinone-8 (UQ-8) biosynthesis, which is the condensation of the polyisoprenoid side chain with PHB, generating the first membrane-bound Q intermediate 3-octaprenyl-4-hydroxybenzoate. The protein is 4-hydroxybenzoate octaprenyltransferase of Shewanella pealeana (strain ATCC 700345 / ANG-SQ1).